We begin with the raw amino-acid sequence, 361 residues long: Serpentine receptor class X 45 (361 aa).

7 helical membrane passes run 20-40, 58-78, 92-112, 133-153, 176-196, 242-262, and 278-298; these read LLIF…AFYI, AAGD…VLFF, FAQL…VISL, TTFL…FLVI, MINV…MFAI, LLYV…PVPL, and LLTT…TLIF. N317 carries an N-linked (GlcNAc...) asparagine glycan.

It belongs to the G-protein coupled receptor 1 family.

It localises to the cell membrane. The chain is Serpentine receptor class X 45 (srx-45) from Caenorhabditis elegans.